Consider the following 275-residue polypeptide: uncharacterized protein (275 aa).

Belongs to the MtfA family.

This is an uncharacterized protein from Synechocystis sp. (strain ATCC 27184 / PCC 6803 / Kazusa).